An 873-amino-acid polypeptide reads, in one-letter code: DNA helicase/primase complex-associated protein (873 aa).

The disordered stretch occupies residues 394–422; the sequence is PPLPRDDGDGENNVVEVSSSTGGAHPPSD.

The protein belongs to the herpesviridae HEPA family. Associates with the primase and the helicase to form the helicase-primase complex. Interacts with the origin-binding protein. Interacts with the polymerase catalytic subunit.

Its subcellular location is the host nucleus. Component of the helicase/primase complex. Unwinds the DNA at the replication forks and generates single-stranded DNA for both leading and lagging strand synthesis. The primase synthesizes short RNA primers on the lagging strand that the polymerase presumably elongates using dNTPs. The primase-associated factor has no known catalytic activity in the complex and may serve to facilitate the formation of the replisome by directly interacting with the origin-binding protein and the polymerase. In Human cytomegalovirus (strain Merlin) (HHV-5), this protein is DNA helicase/primase complex-associated protein (UL102).